The following is a 1343-amino-acid chain: DNA-directed RNA polymerase subunit beta (1343 aa).

Belongs to the RNA polymerase beta chain family. The RNAP catalytic core consists of 2 alpha, 1 beta, 1 beta' and 1 omega subunit. When a sigma factor is associated with the core the holoenzyme is formed, which can initiate transcription.

It carries out the reaction RNA(n) + a ribonucleoside 5'-triphosphate = RNA(n+1) + diphosphate. Its function is as follows. DNA-dependent RNA polymerase catalyzes the transcription of DNA into RNA using the four ribonucleoside triphosphates as substrates. This is DNA-directed RNA polymerase subunit beta from Haemophilus influenzae (strain PittEE).